Reading from the N-terminus, the 559-residue chain is T-complex protein 1 subunit gamma (559 aa).

Cysteine 368 and cysteine 374 form a disulfide bridge. The disordered stretch occupies residues 531–559 (KDKRGGAGQRGGDRGQGDQEETFGDQRDG).

The protein belongs to the TCP-1 chaperonin family. Heterooligomeric complex of about 850 to 900 kDa that forms two stacked rings, 12 to 16 nm in diameter.

The protein resides in the cytoplasm. Its function is as follows. Molecular chaperone; assists the folding of proteins upon ATP hydrolysis. Known to play a role, in vitro, in the folding of actin and tubulin. The protein is T-complex protein 1 subunit gamma of Oxytricha granulifera (Ciliate).